We begin with the raw amino-acid sequence, 118 residues long: Large ribosomal subunit protein uL18 (118 aa).

The protein belongs to the universal ribosomal protein uL18 family. As to quaternary structure, part of the 50S ribosomal subunit; part of the 5S rRNA/L5/L18/L25 subcomplex. Contacts the 5S and 23S rRNAs.

This is one of the proteins that bind and probably mediate the attachment of the 5S RNA into the large ribosomal subunit, where it forms part of the central protuberance. The sequence is that of Large ribosomal subunit protein uL18 from Campylobacter hominis (strain ATCC BAA-381 / DSM 21671 / CCUG 45161 / LMG 19568 / NCTC 13146 / CH001A).